The chain runs to 298 residues: Glycine--tRNA ligase alpha subunit (298 aa).

It belongs to the class-II aminoacyl-tRNA synthetase family. Tetramer of two alpha and two beta subunits.

It is found in the cytoplasm. The enzyme catalyses tRNA(Gly) + glycine + ATP = glycyl-tRNA(Gly) + AMP + diphosphate. In Helicobacter acinonychis (strain Sheeba), this protein is Glycine--tRNA ligase alpha subunit.